An 85-amino-acid chain; its full sequence is Large ribosomal subunit protein bL27 (85 aa).

The tract at residues 1–22 (MAHKKAGGSTNNGRDSESKRLG) is disordered.

This sequence belongs to the bacterial ribosomal protein bL27 family.

The protein is Large ribosomal subunit protein bL27 of Photobacterium profundum (strain SS9).